We begin with the raw amino-acid sequence, 502 residues long: uncharacterized protein (502 aa).

Low complexity-rich tracts occupy residues 1–10, 28–47, and 155–171; these read MQSTTNNNTN, SNRSAYRSASKSASRSNNLS, and NTEDTNDDNSNSQSVNS. Disordered stretches follow at residues 1–57, 155–181, 212–362, and 438–487; these read MQST…VISY, NTEDTNDDNSNSQSVNSRTDSDNLSAR, SLGN…TDKF, and TIDQ…TSNL. Positions 212 to 230 are enriched in polar residues; the sequence is SLGNSERNSPDRPSTQGDS. Composition is skewed to low complexity over residues 242-290 and 309-327; these read RNAS…SSRN and SNKNSASRNSASRNSTSIK. A compositionally biased stretch (polar residues) spans 339-348; it reads QTNKSKNQRG. A compositionally biased stretch (low complexity) spans 446 to 460; that stretch reads TSDKNNSTKSNTKYN. Over residues 470–487 the composition is skewed to polar residues; it reads SYGTSKRSHNRSSNTSNL.

The protein resides in the virion. This is an uncharacterized protein from Acanthamoeba polyphaga (Amoeba).